The chain runs to 163 residues: Nucleotide-binding protein BcerKBAB4_1061 (163 aa).

The protein belongs to the YajQ family.

In terms of biological role, nucleotide-binding protein. The polypeptide is Nucleotide-binding protein BcerKBAB4_1061 (Bacillus mycoides (strain KBAB4) (Bacillus weihenstephanensis)).